The following is a 391-amino-acid chain: Succinyl-diaminopimelate desuccinylase (391 aa).

Position 74 (His74) interacts with Zn(2+). Residue Asp76 is part of the active site. Zn(2+) is bound at residue Asp107. Glu141 acts as the Proton acceptor in catalysis. 3 residues coordinate Zn(2+): Glu142, Glu170, and His360.

This sequence belongs to the peptidase M20A family. DapE subfamily. Homodimer. Zn(2+) is required as a cofactor. Requires Co(2+) as cofactor.

The enzyme catalyses N-succinyl-(2S,6S)-2,6-diaminopimelate + H2O = (2S,6S)-2,6-diaminopimelate + succinate. The protein operates within amino-acid biosynthesis; L-lysine biosynthesis via DAP pathway; LL-2,6-diaminopimelate from (S)-tetrahydrodipicolinate (succinylase route): step 3/3. Functionally, catalyzes the hydrolysis of N-succinyl-L,L-diaminopimelic acid (SDAP), forming succinate and LL-2,6-diaminopimelate (DAP), an intermediate involved in the bacterial biosynthesis of lysine and meso-diaminopimelic acid, an essential component of bacterial cell walls. This is Succinyl-diaminopimelate desuccinylase from Variovorax paradoxus (strain S110).